The following is a 585-amino-acid chain: Mycosin-5 (585 aa).

The signal sequence occupies residues M1–A39. A Peptidase S8 domain is found at P83–L521. Active-site charge relay system residues include D109 and H141. Low complexity predominate over residues V163–T173. Positions V163–F269 are disordered. Composition is skewed to pro residues over residues P196–P224 and N252–D267. S466 acts as the Charge relay system in catalysis. A helical membrane pass occupies residues V552–F572.

It belongs to the peptidase S8 family.

It is found in the cell membrane. This Mycobacterium tuberculosis (strain ATCC 25618 / H37Rv) protein is Mycosin-5.